A 176-amino-acid chain; its full sequence is ATP-dependent protease subunit HslV (176 aa).

The active site involves Thr-2. Na(+)-binding residues include Ala-157, Cys-160, and Thr-163.

This sequence belongs to the peptidase T1B family. HslV subfamily. As to quaternary structure, a double ring-shaped homohexamer of HslV is capped on each side by a ring-shaped HslU homohexamer. The assembly of the HslU/HslV complex is dependent on binding of ATP.

It is found in the cytoplasm. It carries out the reaction ATP-dependent cleavage of peptide bonds with broad specificity.. With respect to regulation, allosterically activated by HslU binding. In terms of biological role, protease subunit of a proteasome-like degradation complex believed to be a general protein degrading machinery. In Buchnera aphidicola subsp. Acyrthosiphon pisum (strain APS) (Acyrthosiphon pisum symbiotic bacterium), this protein is ATP-dependent protease subunit HslV.